Consider the following 310-residue polypeptide: B3 domain-containing transcription factor NGA1 (310 aa).

The tract at residues 1 to 26 (MMTDLSLTRDEDEEEAKPLAEEEGAR) is disordered. Over residues 16-26 (AKPLAEEEGAR) the composition is skewed to basic and acidic residues. The TF-B3 DNA-binding region spans 35-141 (FDKVVTPSDV…RLFIDWRRRP (107 aa)). Low complexity predominate over residues 251–268 (ESGMTNSTEEESSSSGGS). The tract at residues 251–310 (ESGMTNSTEEESSSSGGSLPRGGGGGASSSSFFQLRLGSSSEDDHFTKKGKSSLSFDLDQ) is disordered.

Interacts with BRX. Interacts with BZIP30.

It is found in the nucleus. In terms of biological role, regulates lateral organ growth. Functionally redundant with NGA2, NGA3 and NGA4. This chain is B3 domain-containing transcription factor NGA1 (NGA1), found in Arabidopsis thaliana (Mouse-ear cress).